The primary structure comprises 902 residues: 4-hydroxyphenylacetate decarboxylase glycyl radical subunit (902 aa).

The PFL domain maps to Lys-38–Leu-774. 2 residues coordinate 4-hydroxyphenylacetate: Ser-348 and Cys-507. Cys-507 functions as the Cysteine radical intermediate in the catalytic mechanism. The active-site Proton donor is Glu-509. Residues His-540 and Glu-641 each coordinate 4-hydroxyphenylacetate. One can recognise a Glycine radical domain in the interval Gly-782–Val-902. A Glycine radical modification is found at Gly-877.

This sequence belongs to the glycyl radical enzyme (GRE) family. HPAD subfamily. Heterooctamer consisting of 4 large (HpdB) subunits and 4 small (HpdC) subunits, arranged as a tetramer of heterodimers. Also forms a catalytically inactive homodimer. Post-translationally, requires the activating protein CsdA to generate the key active site glycyl radical that is involved in catalysis. In terms of processing, phosphorylated on serine. Phosphorylation may trigger the formation of the active heterooctamers and thereby regulates enzyme activity.

It catalyses the reaction 4-hydroxyphenylacetate + H(+) = 4-methylphenol + CO2. The catalysed reaction is 3,4-dihydroxyphenylacetate + H(+) = 4-methylcatechol + CO2. Functionally, glycyl radical subunit of the HPA decarboxylase that decarboxylates phenylacetates with a hydroxyl group in the p-position. Active toward 4-hydroxyphenylacetate and 3,4-dihydroxyphenylacetate, forming 4-methylphenol and 4-methylcatechol, respectively. Is likely involved in the catabolism of aromatic amino acids such as tyrosine fermentation. 4-methylphenol (p-cresol) formation provides metabolic toxicity, which allows an active suppression of other microbes and may provide growth advantages for the producers in highly competitive environments. The large subunit is the catalytic subunit that binds the substrate. This is 4-hydroxyphenylacetate decarboxylase glycyl radical subunit from Clostridioides difficile (strain 630) (Peptoclostridium difficile).